The following is a 185-amino-acid chain: Ribosome-recycling factor (185 aa).

Belongs to the RRF family.

It is found in the cytoplasm. Responsible for the release of ribosomes from messenger RNA at the termination of protein biosynthesis. May increase the efficiency of translation by recycling ribosomes from one round of translation to another. In Sodalis glossinidius (strain morsitans), this protein is Ribosome-recycling factor.